We begin with the raw amino-acid sequence, 530 residues long: MARTGWTSPIPLCVSLLLTCGFAEAGKLLVVPMDGSHWFTMQSVVEKLILRGHEVVVVMPEVSWQLGKSLNCTVKTYSTSYTLEDLDREFMDFADAQWKAQVRSLFSLFLSSSNGFFNLFFSHCRSLFNDRKLVEYLKESSFDAVFLDPFDACGLIVAKYFSLPSVVFARGIACHYLEEGAQCPAPLSYVPRILLGFSDAMTFKERVRNHIMHLEEHLFCQYFSKNALEIASEILQTPVTAYDLYSHTSIWLLRTDFVLDYPKPVMPNMIFIGGINCHQGKPLPMEFEAYINASGEHGIVVFSLGSMVSEIPEKKAMAIADALGKIPQTVLWRYTGTRPSNLANNTILVKWLPQNDLLGHPMTRAFITHAGSHGVYESICNGVPMVMMPLFGDQMDNAKRMETKGAGVTLNVLEMTSEDLENALKAVINDKSYKENIMRLSSLHKDRPVEPLDLAVFWVEFVMRHKGAPHLRPAAHDLTWYQYHSLDVIGFLLAVVLTVAFITFKCCAYGYRKCLGKKGRVKKAHKSKTH.

A signal peptide spans 1 to 25 (MARTGWTSPIPLCVSLLLTCGFAEA). Asn71, Asn292, and Asn344 each carry an N-linked (GlcNAc...) asparagine glycan. Residues 488 to 504 (VIGFLLAVVLTVAFITF) form a helical membrane-spanning segment.

This sequence belongs to the UDP-glycosyltransferase family. In terms of assembly, homodimer. Homooligomer. Interacts with UGT1A1, UGT1A3, UGT1A4, UGT1A6, UGT1A7, UGT1A9 and UGT1A10 to form heterodimers. Isoform 1 interacts with isoform 2/i2 suggesting that oligomerization is involved in negative regulation of transferase activity by isoform 2. Isoform 1 also interacts with respective i2 isoforms of UGT1A1, UGT1A3, UGT1A4, UGT1A6, UGT1A7, UGT1A9 and UGT1A10. Expressed in kidney, colon and small intestine. Not expressed in liver. As to expression, expressed in liver, kidney, colon and small intestine.

The protein localises to the endoplasmic reticulum membrane. The enzyme catalyses glucuronate acceptor + UDP-alpha-D-glucuronate = acceptor beta-D-glucuronoside + UDP + H(+). It catalyses the reaction 17beta-estradiol + UDP-alpha-D-glucuronate = 17beta-estradiol 3-O-(beta-D-glucuronate) + UDP + H(+). The catalysed reaction is 17alpha-estradiol + UDP-alpha-D-glucuronate = 17alpha-estradiol 3-O-(beta-D-glucuronate) + UDP + H(+). It carries out the reaction estrone + UDP-alpha-D-glucuronate = estrone 3-O-(beta-D-glucuronate) + UDP + H(+). The enzyme catalyses 16alpha,17alpha-estriol + UDP-alpha-D-glucuronate = 16alpha,17alpha-estriol 3-O-(beta-D-glucuronate) + UDP + H(+). It catalyses the reaction 2-hydroxy-17beta-estradiol + UDP-alpha-D-glucuronate = 2-hydroxy-17beta-estradiol 3-O-(beta-D-glucuronate) + UDP + H(+). The catalysed reaction is 2-hydroxy-17beta-estradiol + UDP-alpha-D-glucuronate = 17beta-estradiol 2-O-(beta-D-glucuronate) + UDP + H(+). It carries out the reaction 2-hydroxyestrone + UDP-alpha-D-glucuronate = 2-hydroxyestrone 3-O-(beta-D-glucuronate) + UDP + H(+). The enzyme catalyses 4-hydroxy-17beta-estradiol + UDP-alpha-D-glucuronate = 4-hydroxy-17beta-estradiol 3-O-(beta-D-glucuronate) + UDP + H(+). It catalyses the reaction 4-hydroxy-17beta-estradiol + UDP-alpha-D-glucuronate = 17beta-estradiol 4-O-(beta-D-glucuronate) + UDP + H(+). The catalysed reaction is 4-hydroxyestrone + UDP-alpha-D-glucuronate = 4-hydroxyestrone 3-O-(beta-D-glucuronate) + UDP + H(+). It carries out the reaction 4-hydroxyestrone + UDP-alpha-D-glucuronate = estrone 4-O-(beta-D-glucuronate) + UDP + H(+). The enzyme catalyses 2-methoxy-17beta-estradiol + UDP-alpha-D-glucuronate = 2-methoxy-17beta-estradiol 3-O-(beta-D-glucuronate) + UDP + H(+). It catalyses the reaction 2-methoxyestrone + UDP-alpha-D-glucuronate = 2-methoxyestrone 3-O-(beta-D-glucuronate) + UDP + H(+). The catalysed reaction is 4-methoxy-17beta-estradiol + UDP-alpha-D-glucuronate = 4-methoxy-17beta-estradiol 3-O-(beta-D-glucuronate) + UDP + H(+). It carries out the reaction 4-methoxyestrone + UDP-alpha-D-glucuronate = 4-methoxyestrone 3-O-(beta-D-glucuronate) + UDP + H(+). The enzyme catalyses 17beta-hydroxy-5alpha-androstan-3-one + UDP-alpha-D-glucuronate = 5alpha-dihydrotestosterone 17-O-(beta-D-glucuronate) + UDP + H(+). It catalyses the reaction 5alpha-dihydrotestosterone 17-O-(beta-D-glucuronate) + UDP-alpha-D-glucuronate = 5alpha-dihydrotestosterone 17-O-[beta-D-glucuronosyl-(1-&gt;2)-glucuronate] + UDP + H(+). The catalysed reaction is prunetin + UDP-alpha-D-glucuronate = prunetin-4'-O-beta-D-glucuronide + UDP. It carries out the reaction prunetin + UDP-alpha-D-glucuronate = prunetin-5-O-beta-D-glucuronide + UDP. The enzyme catalyses candesartan + UDP-alpha-D-glucuronate = candesartan O-beta-D-glucuronoside + UDP. It catalyses the reaction mycophenolate + UDP-alpha-D-glucuronate = mycophenolate 7-O-beta-D-glucuronide + UDP + H(+). The catalysed reaction is (E)-ferulate + UDP-alpha-D-glucuronate = (E)-4-O-(beta-D-glucuronosyl)-ferulate + UDP + H(+). It carries out the reaction (E)-ferulate + UDP-alpha-D-glucuronate = (E)-ferulic acid beta-D-glucuronate ester + UDP. Its function is as follows. UDP-glucuronosyltransferase (UGT) that catalyzes phase II biotransformation reactions in which lipophilic substrates are conjugated with glucuronic acid to increase the metabolite's water solubility, thereby facilitating excretion into either the urine or bile. Essential for the elimination and detoxification of drugs, xenobiotics and endogenous compounds. Catalyzes the glucuronidation of endogenous steroid hormones such as androgens and estrogens. Produces dihydrotestosterone (DHT) diglucuronide from the DHT after two subsequent glucoronidation steps. Involved in the glucuronidation of the phytochemical ferulic acid at the phenolic or the carboxylic acid group. Also catalyzes the glucuronidation of the isoflavones genistein, daidzein, glycitein, formononetin, biochanin A and prunetin, which are phytoestrogens with anticancer and cardiovascular properties. Involved in the glucuronidation of the AGTR1 angiotensin receptor antagonist caderastan, a drug which can inhibit the effect of angiotensin II. Also metabolizes mycophenolate, an immunosuppressive agent. Lacks UGT glucuronidation activity but acts as a negative regulator of isoform 1. The sequence is that of UDP-glucuronosyltransferase 1A8 from Homo sapiens (Human).